The sequence spans 555 residues: Exodeoxyribonuclease 7 large subunit (555 aa).

Belongs to the XseA family. In terms of assembly, heterooligomer composed of large and small subunits.

It localises to the cytoplasm. It catalyses the reaction Exonucleolytic cleavage in either 5'- to 3'- or 3'- to 5'-direction to yield nucleoside 5'-phosphates.. Functionally, bidirectionally degrades single-stranded DNA into large acid-insoluble oligonucleotides, which are then degraded further into small acid-soluble oligonucleotides. The polypeptide is Exodeoxyribonuclease 7 large subunit (Chlamydia felis (strain Fe/C-56) (Chlamydophila felis)).